A 460-amino-acid chain; its full sequence is Pentatricopeptide repeat-containing protein At5g43790 (460 aa).

PPR repeat units follow at residues 70–107, 111–142, 149–179, 180–214, 215–249, 250–280, 281–315, 316–351, and 352–382; these read SVFLYNTLISSIVSNHNSTQTHLAFSLYDQILSSRSNF, NEFTYPSLFKASGFDAQWHRHGRALHAHVLKF, DRFVQAALVGFYANCGKLREARSLFERIREP, DLATWNTLLAAYANSEEIDSDEEVLLLFMRMQVRP, NELSLVALIKSCANLGEFVRGVWAHVYVLKNNLTL, NQFVGTSLIDLYSKCGCLSFARKVFDEMSQR, DVSCYNAMIRGLAVHGFGQEGIELYKSLISQGLVP, DSATFVVTISACSHSGLVDEGLQIFNSMKAVYGIEP, and KVEHYGCLVDLLGRSGRLEEAEECIKKMPVK. A type E motif; degenerate region spans residues 387–460; the sequence is LWRSFLGSSQ…NKSPGISTLN (74 aa).

It belongs to the PPR family. PCMP-E subfamily.

This is Pentatricopeptide repeat-containing protein At5g43790 (PCMP-E30) from Arabidopsis thaliana (Mouse-ear cress).